A 126-amino-acid chain; its full sequence is Adenosine 5'-monophosphoramidase HINT1 (126 aa).

Ala-2 carries the N-acetylalanine modification. One can recognise an HIT domain in the interval 18 to 126; it reads IFGKIIRKEI…GGRQMHWPPG (109 aa). 2 positions are modified to N6-acetyllysine: Lys-21 and Lys-30. 43 to 44 is an AMP binding site; sequence DI. Phosphoserine occurs at positions 45 and 72. AMP-binding positions include Asn-99, 105–107, and 112–114; these read GQS and HLH. Positions 110-114 match the Histidine triad motif motif; that stretch reads HVHLH. Catalysis depends on His-112, which acts as the Tele-AMP-histidine intermediate.

This sequence belongs to the HINT family. Homodimer. Interacts with CDK7. Interacts with RUVBL1 and RUVBL2 and is associated with the LEF1/TCF1-CTNNB1 complex and with a KAT5 histone acetyltransferase complex. Identified in a complex with MITF and CTNNB1. Interacts with CDC34 and RBX1, and is part of a SCF (SKP2-CUL1-F-box protein) E3 ubiquitin-protein ligase complex. Interacts with SUMO1, SUMO2 and RGS17. Interacts with the Ten-1 ICD form of TENM1. Interacts with CALM1; interaction increases in the presence of calcium ions. As to expression, widely expressed.

The protein resides in the cytoplasm. It is found in the nucleus. It carries out the reaction adenosine 5'-phosphoramidate + H2O = AMP + NH4(+). In terms of biological role, exhibits adenosine 5'-monophosphoramidase activity, hydrolyzing purine nucleotide phosphoramidates with a single phosphate group such as adenosine 5'monophosphoramidate (AMP-NH2) to yield AMP and NH2. Hydrolyzes adenosine 5'monophosphomorpholidate (AMP-morpholidate) and guanosine 5'monophosphomorpholidate (GMP-morpholidate). Hydrolyzes lysyl-AMP (AMP-N-epsilon-(N-alpha-acetyl lysine methyl ester)) generated by lysine tRNA ligase, as well as Met-AMP, His-AMP and Asp-AMP, lysyl-GMP (GMP-N-epsilon-(N-alpha-acetyl lysine methyl ester)) and AMP-N-alanine methyl ester. Hydrolyzes 3-indolepropionic acyl-adenylate, tryptamine adenosine phosphoramidate monoester and other fluorogenic purine nucleoside tryptamine phosphoramidates in vitro. Can also convert adenosine 5'-O-phosphorothioate and guanosine 5'-O-phosphorothioate to the corresponding nucleoside 5'-O-phosphates with concomitant release of hydrogen sulfide. In addition, functions as scaffolding protein that modulates transcriptional activation by the LEF1/TCF1-CTNNB1 complex and by the complex formed with MITF and CTNNB1. Modulates p53/TP53 levels and p53/TP53-mediated apoptosis. Modulates proteasomal degradation of target proteins by the SCF (SKP2-CUL1-F-box protein) E3 ubiquitin-protein ligase complex. Also exhibits SUMO-specific isopeptidase activity, deconjugating SUMO1 from RGS17. Deconjugates SUMO1 from RANGAP1. This Homo sapiens (Human) protein is Adenosine 5'-monophosphoramidase HINT1 (HINT1).